A 344-amino-acid polypeptide reads, in one-letter code: Nuclear distribution protein nudE-like 1-B (344 aa).

Residues 13-190 are a coiled coil; that stretch reads KEEIVYWREL…LAVRERQTDG (178 aa). 2 disordered regions span residues 186-209 and 325-344; these read RQTD…TDSS and PPGV…PLSV. Residues 333–344 are compositionally biased toward pro residues; that stretch reads PPSPPGLLPLSV.

Belongs to the nudE family. Phosphorylated in mitosis.

Its subcellular location is the cytoplasm. It is found in the cytoskeleton. It localises to the microtubule organizing center. The protein localises to the centrosome. The protein resides in the spindle. In terms of biological role, required for organization of the cellular microtubule array and microtubule anchoring at the centrosome. Positively regulates the activity of the minus-end directed microtubule motor protein dynein. May enhance dynein-mediated microtubule sliding by targeting dynein to the microtubule plus end. Positively regulates lysosome peripheral distribution and ruffled border formation in osteoclasts. This Xenopus laevis (African clawed frog) protein is Nuclear distribution protein nudE-like 1-B (ndel1-b).